Here is a 506-residue protein sequence, read N- to C-terminus: Acyl-CoA-binding domain-containing protein 5 (506 aa).

The ACB domain occupies 44–133 (YETRFEAAVK…MKKIIETMPM (90 aa)). Residues 55–64 (IQSLPKNGSF), 75–79 (YSFYK), K101, and Y120 contribute to the an acyl-CoA site. The tract at residues 175–217 (AKAVNGKAESSDSGAESEEEEAQEELKGAEQSGSDDKKMMTKS) is disordered. The stretch at 181–209 (KAESSDSGAESEEEEAQEELKGAEQSGSD) forms a coiled coil. 6 positions are modified to phosphoserine: S184, S185, S187, S191, S206, and S233. Over residues 198–217 (EELKGAEQSGSDDKKMMTKS) the composition is skewed to basic and acidic residues. 2 disordered regions span residues 234–302 (FAQD…CDSM) and 345–417 (AVKG…RGSR). The segment covering 238 to 257 (SDIHTDSSRSARRSEDKKPT) has biased composition (basic and acidic residues). A compositionally biased stretch (polar residues) spans 258–267 (DQSSQQTGNT). S301 is modified (phosphoserine). Positions 348–360 (GKGEVKHGGEDGR) are enriched in basic and acidic residues. Phosphoserine is present on S403. Residues 406–416 (DGERWGSDRGS) show a composition bias toward basic and acidic residues. Positions 426–451 (LVLIRLQEDMQNVLQRLHKLETLTAS) form a coiled coil. Residue K444 is modified to N6-acetyllysine. Residues 478–498 (GALAFAIIWPFIAQWLVHLYY) traverse the membrane as a helical segment.

The protein belongs to the ATG37 family.

It localises to the peroxisome membrane. Functionally, acyl-CoA binding protein which acts as the peroxisome receptor for pexophagy but is dispensable for aggrephagy and nonselective autophagy. Binds medium- and long-chain acyl-CoA esters. The sequence is that of Acyl-CoA-binding domain-containing protein 5 (Acbd5) from Rattus norvegicus (Rat).